Consider the following 206-residue polypeptide: mRNA-decapping protein D9 (206 aa).

The 184-residue stretch at 23-206 (KKTHVFAICV…FIYNTLLYSK (184 aa)) folds into the Nudix hydrolase domain. A Nudix box motif is present at residues 104–125 (GKLNKSETIDDCIRREIKEETD). E110 contacts Mg(2+). E119 serves as the catalytic Nucleophile. 2 residues coordinate Mg(2+): E123 and D144.

Belongs to the Nudix hydrolase family. Requires Mg(2+) as cofactor. The cofactor is Mn(2+).

Functionally, decapping enzyme required for the removal of the 5'-end m7GpppN cap tethered to viral and host mRNAs to allow their decay in cells. May therefore accelerate viral and cellular mRNA turnover to eliminate competing host mRNAs and allow stage-specific synthesis of viral proteins. Acceleration of the turnover of cellular transcripts may even promote the shutoff of host protein synthesis. Does not cleave unmethylated RNAs or RNAs shorter than 24 nucleotides. The protein is mRNA-decapping protein D9 of Oryctolagus cuniculus (Rabbit).